Reading from the N-terminus, the 178-residue chain is Inorganic pyrophosphatase (178 aa).

Substrate contacts are provided by lysine 30, arginine 44, and tyrosine 56. Mg(2+) contacts are provided by aspartate 66, aspartate 71, and aspartate 103. Residue tyrosine 142 participates in substrate binding.

This sequence belongs to the PPase family. In terms of assembly, homohexamer. It depends on Mg(2+) as a cofactor.

The protein localises to the cytoplasm. It carries out the reaction diphosphate + H2O = 2 phosphate + H(+). Catalyzes the hydrolysis of inorganic pyrophosphate (PPi) forming two phosphate ions. In Bradyrhizobium diazoefficiens (strain JCM 10833 / BCRC 13528 / IAM 13628 / NBRC 14792 / USDA 110), this protein is Inorganic pyrophosphatase.